We begin with the raw amino-acid sequence, 200 residues long: AP-5 complex subunit sigma-1 (200 aa).

As to quaternary structure, probably part of the adaptor protein complex 5 (AP-5) a tetramer composed of AP5B1, AP5M1, AP5S1 and AP5Z1. Interacts with ZFYVE26 and SPG11.

The protein localises to the cytoplasm. The protein resides in the cytosol. It localises to the late endosome membrane. It is found in the lysosome membrane. As part of AP-5, a probable fifth adaptor protein complex it may be involved in endosomal transport. According to PubMed:20613862, it is required for efficient homologous recombination DNA double-strand break repair. The sequence is that of AP-5 complex subunit sigma-1 (AP5S1) from Homo sapiens (Human).